The following is a 223-amino-acid chain: Endonuclease NucS (223 aa).

Belongs to the NucS endonuclease family.

The protein resides in the cytoplasm. Cleaves both 3' and 5' ssDNA extremities of branched DNA structures. The sequence is that of Endonuclease NucS from Mycobacterium sp. (strain JLS).